The chain runs to 175 residues: Co-chaperone protein HscB homolog (175 aa).

The region spanning 7 to 79 is the J domain; the sequence is SHFDLFHLPA…LKRASYLLSL (73 aa).

This sequence belongs to the HscB family. In terms of assembly, interacts with HscA and stimulates its ATPase activity.

Functionally, co-chaperone involved in the maturation of iron-sulfur cluster-containing proteins. Seems to help targeting proteins to be folded toward HscA. The chain is Co-chaperone protein HscB homolog from Burkholderia cenocepacia (strain ATCC BAA-245 / DSM 16553 / LMG 16656 / NCTC 13227 / J2315 / CF5610) (Burkholderia cepacia (strain J2315)).